A 209-amino-acid polypeptide reads, in one-letter code: Ribonuclease HII (209 aa).

The region spanning 6–209 (SLEAGIDEAG…IKRMTNSRLF (204 aa)) is the RNase H type-2 domain. Positions 12, 13, and 108 each coordinate a divalent metal cation.

Belongs to the RNase HII family. Mn(2+) serves as cofactor. The cofactor is Mg(2+).

The protein resides in the cytoplasm. It catalyses the reaction Endonucleolytic cleavage to 5'-phosphomonoester.. In terms of biological role, endonuclease that specifically degrades the RNA of RNA-DNA hybrids. The polypeptide is Ribonuclease HII (Caldivirga maquilingensis (strain ATCC 700844 / DSM 13496 / JCM 10307 / IC-167)).